The primary structure comprises 354 residues: Nucleoporin seh1 (354 aa).

WD repeat units lie at residues 10–49, 55–96, 112–153, 161–209, 216–259, and 270–309; these read DHKDVIHDVVFDYYGRRMATCSSDQTVKIWDEDGQGKWNV, AHSG…KVSS, DSRT…NLSQ, SNKL…RKCV, DITD…TDIS, and EHNCPVWRVCWNMLATMLISTGDDGCVRLWRMNYNRQWRC.

The protein belongs to the WD repeat SEC13 family. Probable component of the nuclear pore complex (NPC). Component of the GATOR complex consisting of mio, Nup44A/Seh1, Im11, Nplr3, Nplr2, Wdr24, Wdr59 and Sec13. Within the GATOR complex, probable component of the GATOR2 subcomplex which is likely composed of mio, Nup44A/Seh1, Wdr24, Wdr59 and Sec13. Interacts with mio. Interacts with Wdr24. The GATOR2 complex associates with unmet in the absence of S-adenosyl-L-methionine; the mio-Wdr24-Nup44A subcomplex is essential and sufficient for this interaction while Wdr59 and Sec13 are dispensable. This association acts as a nutrient sensor to inhibit mTORC1 signaling in the absence of methionine. In terms of tissue distribution, expressed in ovarian cysts.

It is found in the nucleus envelope. Its subcellular location is the lysosome. Its function is as follows. Probable component of the nuclear pore complex (NPC). Involved in maintaining the localization of another nucleoporin Mgtor to the nuclear envelope of early meiotic female germline cells. It is not involved in recruiting the nucleoporins Mgtor, Nup107, Nup153 and FG-containing nucleoporins to the NPC. Functionally, an essential component of the GATOR subcomplex GATOR2 which functions as an activator of the amino acid-sensing branch of the mTORC1 signaling pathway. The two GATOR subcomplexes, GATOR1 and GATOR2, regulate the mTORC1 pathway in order to mediate metabolic homeostasis, female gametogenesis and the response to amino acid limitation and complete starvation. GATOR2 activates the mTORC1 signaling pathway through the inhibition of the GATOR1 subcomplex, controlling the switch to cell proliferation growth under nutrient replete conditions and growth during female oocyte development. This component is required for activating mTORC1 specifically in germline cells to promote cell growth and maintain the oocyte fate, probably influences the organization and/or function of microtubules within ovarian cysts, and promotes accumulation of another GATOR2 complex member mio in germline and somatic tissues. GATOR1 and GATOR2 act at different stages of oogenesis to regulate mTORC1 in order to control meiotic entry and promote oocyte growth and development. After exactly four mitotic cyst divisions, the GATOR1 complex members (Iml1, Nprl2 and Nprl3) down-regulate mTORC1 to slow cellular metabolism and promote the mitotic/meiotic transition. At later stages of oogenesis, the mio and Nup44A components of the GATOR2 complex inhibit GATOR1 and thus activate mTORC1 to promote meiotic progression, and drive oocyte growth and development. In addition to its role in the regulation of the mTORC1 complex, functions independently of mTORC1 to prevent the inappropriate accumulation of autolysosomes in germline tissues. In Drosophila melanogaster (Fruit fly), this protein is Nucleoporin seh1.